Here is a 126-residue protein sequence, read N- to C-terminus: Holo-[acyl-carrier-protein] synthase (126 aa).

Aspartate 9 and glutamate 58 together coordinate Mg(2+).

This sequence belongs to the P-Pant transferase superfamily. AcpS family. It depends on Mg(2+) as a cofactor.

The protein localises to the cytoplasm. The enzyme catalyses apo-[ACP] + CoA = holo-[ACP] + adenosine 3',5'-bisphosphate + H(+). Its function is as follows. Transfers the 4'-phosphopantetheine moiety from coenzyme A to a Ser of acyl-carrier-protein. This chain is Holo-[acyl-carrier-protein] synthase, found in Cronobacter sakazakii (strain ATCC BAA-894) (Enterobacter sakazakii).